Here is a 318-residue protein sequence, read N- to C-terminus: Olfactory receptor 5M5 (318 aa).

Topologically, residues 1-31 are extracellular; sequence MLAPKKMVRGNYSMVTEFILLGLTDRPELQP. A glycan (N-linked (GlcNAc...) asparagine) is linked at N11. The helical transmembrane segment at 32 to 52 threads the bilayer; it reads LLFVLFLVIYLITVGGNLGMM. Residues 53–60 are Cytoplasmic-facing; it reads VLIRIDSR. The helical transmembrane segment at 61–81 threads the bilayer; the sequence is LHTPMYYFLASLSCLDLCYST. The Extracellular segment spans residues 82–105; the sequence is NVTPKMLVNFLSEKKTISYAACLV. A disulfide bridge connects residues C103 and C195. The helical transmembrane segment at 106 to 126 threads the bilayer; sequence QCYFFIAMVITEYYMLAVMAY. At 127–139 the chain is on the cytoplasmic side; sequence DRYMAICNPLLYS. The helical transmembrane segment at 140-160 threads the bilayer; sequence SKMSKGVCVRLIAGPYIYGFL. At 161-202 the chain is on the extracellular side; the sequence is SGLMETMWTYRLTFCGSNIINHFYCADPPLIRLSCSDTFIKE. The helical transmembrane segment at 203-223 threads the bilayer; that stretch reads TSMFVVAGFNLSNSLFIILIS. The Cytoplasmic portion of the chain corresponds to 224–243; it reads YLFILIAILRMRSAEGRRKA. Residues 244–264 traverse the membrane as a helical segment; that stretch reads FSTCGSHLVAVTVFYGTLFCM. Over 265 to 277 the chain is Extracellular; it reads YVRPPTDKSVEQS. Residues 278–298 form a helical membrane-spanning segment; that stretch reads KIIAVFYTFVSPMLNPIIYSL. Over 299–318 the chain is Cytoplasmic; sequence RNKDVKHAFWKLVRRNVLSK.

Belongs to the G-protein coupled receptor 1 family.

It localises to the cell membrane. Its function is as follows. Potential odorant receptor. This is Olfactory receptor 5M5 from Mus musculus (Mouse).